Here is a 305-residue protein sequence, read N- to C-terminus: MIKQRTLKQSIKVTGVGLHSGNKVTLTLRPAMANTGVIYCRTDLNPPVTFPANANAVRDTMLCTCLVNEEGVRISTVEHLNAALAGLGIDNVIIEVDAPEIPIMDGSASPFIYLLLDAGIEEQNAAKKFIRIKQKVRVEDGDKWAEFTPYNGFRLDFTIDFEHPAIGKDVRNYVMDFSAQAFVQQISRARTFGFMKDIEYLQSQGLALGGSLDNAIVLDDYRILNEDGLRFKDELVRHKMLDAIGDLYMAGYNIIGDFKAYKSGHGLNNKLLRAVLANQEAWEFVTFDDKQAVPHGYEAPTQVLI.

Zn(2+) is bound by residues His-79, His-238, and Asp-242. His-265 serves as the catalytic Proton donor.

This sequence belongs to the LpxC family. The cofactor is Zn(2+).

The enzyme catalyses a UDP-3-O-[(3R)-3-hydroxyacyl]-N-acetyl-alpha-D-glucosamine + H2O = a UDP-3-O-[(3R)-3-hydroxyacyl]-alpha-D-glucosamine + acetate. Its pathway is glycolipid biosynthesis; lipid IV(A) biosynthesis; lipid IV(A) from (3R)-3-hydroxytetradecanoyl-[acyl-carrier-protein] and UDP-N-acetyl-alpha-D-glucosamine: step 2/6. Functionally, catalyzes the hydrolysis of UDP-3-O-myristoyl-N-acetylglucosamine to form UDP-3-O-myristoylglucosamine and acetate, the committed step in lipid A biosynthesis. This chain is UDP-3-O-acyl-N-acetylglucosamine deacetylase, found in Pasteurella multocida (strain Pm70).